The sequence spans 98 residues: Putative membrane protein insertion efficiency factor (98 aa).

The protein belongs to the UPF0161 family.

Its subcellular location is the cell inner membrane. Functionally, could be involved in insertion of integral membrane proteins into the membrane. This chain is Putative membrane protein insertion efficiency factor, found in Cupriavidus pinatubonensis (strain JMP 134 / LMG 1197) (Cupriavidus necator (strain JMP 134)).